The sequence spans 870 residues: MAEKIYEPQKIEQEVQALWETNQTFKATEQEDKEKFYCLSMFPYPSGRLHMGHVRNYTIGDVVSRFQRMNGKNVLQPMGWDAFGLPAENAALNNNTAPAKWTYQNIDYMKNQLKSLGFGYDWDREVATCKKDYYRWEQWFFTRLYEKGLVYKKNSTVNWDPVDHTVLANEQVIDGRGWRSGALVEQKEIPQWFIKITDYAEELLTDLEQLEDWPEQVRAMQKNWIGRSEGVDITFNLSENAADISSFDVYTTRPDTLYGVTYVAVAAQHPLALHAAQTRPELAEFIESCKNTKVAEAELATMEKKGCDTGLFAIHPLTGEKVAVWVANFVLMGYGSGAVMSVPGHDQRDWEFAQKYGLPIKQVVEPSADEPQECDLTTAAYTDKGVLVNSAEFNGLAFQEAFDAIAAKLEALGAGSKKVNYRLRDWGVSRQRYWGSPIPMLNLENGESVPVPSDQLPVELPEDVQMNGVISPIKADPDWAKTEYNGQPALRETDTFDTFMESSWYYARYCSAQNQDAMLDPTQANYWLPVDQYVGGIEHAILHLLYSRFFHKLLRDEGLVNSDEPYKRLLCQGMVLADSFFREDESGKKEWFSPADVDTVKDEKGRITQATLKADGKPVEHGGMTKMSKSKNNGIDPQHVIDLYGADTIRVFTMFAAPPEQTLEWVDSGVEGANRFIKRVWKLTQDHIDALDGDTAPAIDKTALTGDQKTLRRAVHRTIAKVTDDVGRRQTFNTAVAAIMELLNSLQRAPQSTDQDKAVLREAIESVVLLLNPIAPHMCHILWHDLGHKNDIETAPWPAVDESALVEDEKLIIVQVNGKVRSKITVAADASQEEVQALGLAQENVQQFVDGKTIRKVIYIAGKLLNIVAN.

Residues 43-53 (PYPSGRLHMGH) carry the 'HIGH' region motif. Residues 626–630 (KMSKS) carry the 'KMSKS' region motif. Lys629 is a binding site for ATP.

The protein belongs to the class-I aminoacyl-tRNA synthetase family.

It localises to the cytoplasm. The catalysed reaction is tRNA(Leu) + L-leucine + ATP = L-leucyl-tRNA(Leu) + AMP + diphosphate. This chain is Leucine--tRNA ligase, found in Pseudoalteromonas atlantica (strain T6c / ATCC BAA-1087).